The chain runs to 104 residues: uncharacterized protein (104 aa).

2 disordered regions span residues 1 to 20 (MTET…TTRK) and 83 to 104 (TASA…VAKK). Over residues 83 to 93 (TASASSSGKKV) the composition is skewed to low complexity. The segment covering 94–104 (VASKKKVVAKK) has biased composition (basic residues).

This is an uncharacterized protein from Dictyostelium discoideum (Social amoeba).